Reading from the N-terminus, the 84-residue chain is Exodeoxyribonuclease 7 small subunit (84 aa).

Belongs to the XseB family. Heterooligomer composed of large and small subunits.

It is found in the cytoplasm. It carries out the reaction Exonucleolytic cleavage in either 5'- to 3'- or 3'- to 5'-direction to yield nucleoside 5'-phosphates.. In terms of biological role, bidirectionally degrades single-stranded DNA into large acid-insoluble oligonucleotides, which are then degraded further into small acid-soluble oligonucleotides. This Bartonella bacilliformis (strain ATCC 35685 / KC583 / Herrer 020/F12,63) protein is Exodeoxyribonuclease 7 small subunit.